The following is a 702-amino-acid chain: Pentatricopeptide repeat-containing protein At4g16390, chloroplastic (702 aa).

The N-terminal 53 residues, M1–Q53, are a transit peptide targeting the chloroplast. PPR repeat units lie at residues E174–P208, D209–P243, D244–I278, D279–P313, N314–P348, N349–L383, T384–C414, D420–P454, and T455–P489. The Smr domain occupies L603 to K688.

This sequence belongs to the PPR family. P subfamily. Expressed in leaves and flowers and at lower levels in stems and flower buds.

It is found in the plastid. The protein localises to the chloroplast. Involved in chloroplast RNA processing. Can bind RNA. Involved in chloroplast development. Involved in chloroplast ribosomal RNA (rRNA) processing and/or translation. Required for FtsH-mediated chloroplast biogenesis. Involved in translation and accumulation of chloroplast ATP synthase subunits. This is Pentatricopeptide repeat-containing protein At4g16390, chloroplastic from Arabidopsis thaliana (Mouse-ear cress).